The chain runs to 658 residues: ATP-dependent RNA helicase DDX3Y (658 aa).

The span at 1 to 10 (MSHVVVKNDP) shows a compositional bias: basic and acidic residues. Residues 1–141 (MSHVVVKNDP…DDWSKPLPPS (141 aa)) are disordered. Position 2 is an N-acetylserine (Ser2). Residues 15–34 (QLANLDLNSEKQSGGASTAS) show a composition bias toward polar residues. A compositionally biased stretch (basic and acidic residues) spans 44–68 (RNREASKGFHDKDSSGWSCSKDKDA). An N6-acetyllysine modification is found at Lys55. Phosphoserine is present on residues Ser81, Ser85, and Ser89. Basic and acidic residues predominate over residues 93–128 (GRFDDRGRSDYDGIGNRDRPGFGRFERSGHSRWCDK). At Arg100 the chain carries Omega-N-methylarginine. A Phosphoserine modification is found at Ser101. Tyr103 carries the phosphotyrosine modification. Arg109 bears the Omega-N-methylarginine mark. Residues Ser129 and Ser181 each carry the phosphoserine modification. The Q motif motif lies at 178–206 (ENFSDIDMGEIIMGNIELTRYTRPTPVQK). 198–205 (YTRPTPVQ) provides a ligand contact to ATP. Positions 209–401 (IPIIKGKRDL…RDFLDEYIFL (193 aa)) constitute a Helicase ATP-binding domain. Lys213 is covalently cross-linked (Glycyl lysine isopeptide (Lys-Gly) (interchain with G-Cter in SUMO2)). 222–229 (AQTGSGKT) contributes to the ATP binding site. A DEAD box motif is present at residues 345-348 (DEAD). The region spanning 412 to 573 (NITQKVVWVE…EVPSWLENMA (162 aa)) is the Helicase C-terminal domain. Position 454 is a phosphoserine (Ser454). Position 588 is an omega-N-methylarginine (Arg588). Ser590 and Ser601 each carry phosphoserine. Residues 597–625 (DYRQSSGSSSSGFGASRGSSSRSGGSGYG) are disordered. Residues 601 to 619 (SSGSSSSGFGASRGSSSRS) show a composition bias toward low complexity. Residues Arg613 and Arg628 each carry the omega-N-methylarginine modification.

Belongs to the DEAD box helicase family. DDX3/DED1 subfamily. As to quaternary structure, may interact with TDRD3.

It is found in the cytoplasm. Its subcellular location is the nucleus. The enzyme catalyses ATP + H2O = ADP + phosphate + H(+). In terms of biological role, probable ATP-dependent RNA helicase. May play a role in spermatogenesis. The polypeptide is ATP-dependent RNA helicase DDX3Y (DDX3Y) (Pongo abelii (Sumatran orangutan)).